Reading from the N-terminus, the 500-residue chain is MTDQYVLALDQGTTSSRAILFNRSGDIVSLAQKEFRQIYPQPGWVEHDPQEIWGGQVGVAAEAVAKAGIDGRSIAAIGITNQRETTIVWDRETGQPVYNAIVWQDRRTAEFCDELKARGLGELIRSKTGLLVDAYFSGSKIKWILDNVPGARDRAREGKLAFGTVDSWLIWNFTHGKVHVTDVSNASRTMLYNIHTLQWDAELLDIMGIPASMLPEVKSSSEVYGHTHAAHLGVEIPIAGVAGDQQAALFGQQCTTPGMVKNTYGTGCFMMLNTGDKPIESSNNLLTTIAWKVDGKVQYALEGSIFIGGAVVKWLRDGLGIIRHSADVGPLAQEVKNSDGVYLVPAFAGLGAPHWNASARGTIVGATLGTKAAHIARAALDSIAYQTRDVLKAMEADAGMSIAELRVDGGATVNELLMQFQSDILAVDVVRPKITETTALGAAYLAGLAVGYWKSVDDIQGQWQLDRRFQPAMAADEVLANVKGWQRAVNAAKVWADDQA.

Residue T13 participates in ADP binding. Residues T13, T14, and S15 each coordinate ATP. T13 provides a ligand contact to sn-glycerol 3-phosphate. ADP is bound at residue R17. Residues R83, E84, Y135, and D244 each contribute to the sn-glycerol 3-phosphate site. Positions 83, 84, 135, 244, and 245 each coordinate glycerol. Positions 266, 309, 410, and 414 each coordinate ADP. The ATP site is built by T266, G309, and G410.

It belongs to the FGGY kinase family.

It carries out the reaction glycerol + ATP = sn-glycerol 3-phosphate + ADP + H(+). It functions in the pathway polyol metabolism; glycerol degradation via glycerol kinase pathway; sn-glycerol 3-phosphate from glycerol: step 1/1. Inhibited by fructose 1,6-bisphosphate (FBP). Key enzyme in the regulation of glycerol uptake and metabolism. Catalyzes the phosphorylation of glycerol to yield sn-glycerol 3-phosphate. The protein is Glycerol kinase of Chromobacterium violaceum (strain ATCC 12472 / DSM 30191 / JCM 1249 / CCUG 213 / NBRC 12614 / NCIMB 9131 / NCTC 9757 / MK).